Reading from the N-terminus, the 199-residue chain is NAD(P)H dehydrogenase (quinone) (199 aa).

One can recognise a Flavodoxin-like domain in the interval 4-190; it reads VLVLYYSTYG…AGARHQGELV (187 aa). FMN-binding positions include 10-15 and 78-80; these read STYGHL and TRF. Position 12 (Tyr12) interacts with NAD(+). Residue Trp98 coordinates substrate. Residues 113–119 and His134 each bind FMN; that span reads STATQHG.

This sequence belongs to the WrbA family. FMN is required as a cofactor.

The enzyme catalyses a quinone + NADH + H(+) = a quinol + NAD(+). It carries out the reaction a quinone + NADPH + H(+) = a quinol + NADP(+). The chain is NAD(P)H dehydrogenase (quinone) from Azorhizobium caulinodans (strain ATCC 43989 / DSM 5975 / JCM 20966 / LMG 6465 / NBRC 14845 / NCIMB 13405 / ORS 571).